We begin with the raw amino-acid sequence, 398 residues long: NADH-quinone oxidoreductase subunit D (398 aa).

This sequence belongs to the complex I 49 kDa subunit family. NDH-1 is composed of 14 different subunits. Subunits NuoB, C, D, E, F, and G constitute the peripheral sector of the complex.

Its subcellular location is the cell inner membrane. The enzyme catalyses a quinone + NADH + 5 H(+)(in) = a quinol + NAD(+) + 4 H(+)(out). NDH-1 shuttles electrons from NADH, via FMN and iron-sulfur (Fe-S) centers, to quinones in the respiratory chain. The immediate electron acceptor for the enzyme in this species is believed to be ubiquinone. Couples the redox reaction to proton translocation (for every two electrons transferred, four hydrogen ions are translocated across the cytoplasmic membrane), and thus conserves the redox energy in a proton gradient. This is NADH-quinone oxidoreductase subunit D from Bradyrhizobium sp. (strain BTAi1 / ATCC BAA-1182).